A 130-amino-acid chain; its full sequence is Small ribosomal subunit protein uS8 (130 aa).

Belongs to the universal ribosomal protein uS8 family. Part of the 30S ribosomal subunit.

In terms of biological role, one of the primary rRNA binding proteins, it binds directly to 16S rRNA central domain where it helps coordinate assembly of the platform of the 30S subunit. This is Small ribosomal subunit protein uS8 from Cenarchaeum symbiosum (strain A).